The primary structure comprises 144 residues: Maximins 7/H13 (144 aa).

A signal peptide spans 1 to 18; that stretch reads MNFKYIVAVSFLIASAYA. Residues 19–43 constitute a propeptide that is removed on maturation; sequence RSEENDEQSLSQRDVLEEESLREIR. Asparagine 70 bears the Asparagine amide mark. The propeptide occupies 74–123; sequence TAEDHEVMKRLEAVMRDLDSLDYPEEAAERETRGFNQEEIANLFTKKEKR. Position 143 is a leucine amide (leucine 143).

It belongs to the bombinin family. In terms of tissue distribution, expressed by the skin glands.

The protein resides in the secreted. Its function is as follows. Maximin-7 shows antimicrobial activity against bacteria and against the fungus C.albicans. It has little hemolytic activity. Maximin-H13 shows antimicrobial activity against bacteria and against the fungus C.albicans. Shows strong hemolytic activity. The protein is Maximins 7/H13 of Bombina maxima (Giant fire-bellied toad).